Reading from the N-terminus, the 222-residue chain is Superoxide dismutase [Mn], mitochondrial (222 aa).

A mitochondrion-targeting transit peptide spans Met1 to His24. His50 contacts Mn(2+). Tyr58 bears the 3'-nitrotyrosine mark. Residues Lys68 and Lys75 each carry the N6-acetyllysine; alternate modification. N6-succinyllysine; alternate occurs at positions 68 and 75. A Mn(2+)-binding site is contributed by His98. An N6-acetyllysine modification is found at Lys114. N6-acetyllysine; alternate is present on residues Lys122 and Lys130. 2 positions are modified to N6-succinyllysine; alternate: Lys122 and Lys130. Mn(2+) contacts are provided by Asp183 and His187. Position 202 is an N6-acetyllysine (Lys202).

The protein belongs to the iron/manganese superoxide dismutase family. In terms of assembly, homotetramer. The cofactor is Mn(2+). Post-translationally, nitrated under oxidative stress. Nitration coupled with oxidation inhibits the catalytic activity. Acetylation at Lys-122 decreases enzymatic activity. Deacetylated by SIRT3 upon exposure to ionizing radiations or after long fasting. In terms of processing, polyubiquitinated; leading to proteasomal degradation. Deubiquitinated by USP36 which increases protein stability.

It localises to the mitochondrion matrix. It catalyses the reaction 2 superoxide + 2 H(+) = H2O2 + O2. Destroys superoxide anion radicals which are normally produced within the cells and which are toxic to biological systems. In Mus musculus (Mouse), this protein is Superoxide dismutase [Mn], mitochondrial (Sod2).